A 350-amino-acid chain; its full sequence is Sterol-4-alpha-carboxylate 3-dehydrogenase ERG26, decarboxylating (350 aa).

NADP(+) is bound by residues 12 to 18, 63 to 64, and 85 to 87; these read GGSGFLG, DL, and SAS. Substrate is bound by residues Ser125 and Tyr152. NADP(+)-binding positions include Tyr152, Lys156, and 179–182; that span reads PAGI. The Proton donor role is filled by Lys156.

Belongs to the 3-beta-HSD family. As to quaternary structure, heterotetramer of ERG25, ERG26, ERG27 and ERG28. ERG28 acts as a scaffold to tether ERG27 and other 4,4-demethylation-related enzymes, forming a demethylation enzyme complex, in the endoplasmic reticulum.

The protein resides in the endoplasmic reticulum membrane. The enzyme catalyses 4beta-methylzymosterol-4alpha-carboxylate + NADP(+) = 3-dehydro-4-methylzymosterol + CO2 + NADPH. Its pathway is steroid biosynthesis; zymosterol biosynthesis; zymosterol from lanosterol: step 4/6. Sterol-4-alpha-carboxylate 3-dehydrogenase; part of the third module of ergosterol biosynthesis pathway that includes the late steps of the pathway. ERG26 is a catalytic component of the C-4 demethylation complex that catalyzes the oxidative decarboxylation that results in a reduction of the 3-beta-hydroxy group at the C-3 carbon to an oxo group. The third module or late pathway involves the ergosterol synthesis itself through consecutive reactions that mainly occur in the endoplasmic reticulum (ER) membrane. Firstly, the squalene synthase ERG9 catalyzes the condensation of 2 farnesyl pyrophosphate moieties to form squalene, which is the precursor of all steroids. Squalene synthase is crucial for balancing the incorporation of farnesyl diphosphate (FPP) into sterol and nonsterol isoprene synthesis. Secondly, the squalene epoxidase ERG1 catalyzes the stereospecific oxidation of squalene to (S)-2,3-epoxysqualene, which is considered to be a rate-limiting enzyme in steroid biosynthesis. Then, the lanosterol synthase ERG7 catalyzes the cyclization of (S)-2,3 oxidosqualene to lanosterol, a reaction that forms the sterol core. In the next steps, lanosterol is transformed to zymosterol through a complex process involving various demethylation, reduction and desaturation reactions. The lanosterol 14-alpha-demethylase ERG11 (also known as CYP51) catalyzes C14-demethylation of lanosterol to produce 4,4'-dimethyl cholesta-8,14,24-triene-3-beta-ol, which is critical for ergosterol biosynthesis. The C-14 reductase ERG24 reduces the C14=C15 double bond of 4,4-dimethyl-cholesta-8,14,24-trienol to produce 4,4-dimethyl-cholesta-8,24-dienol. 4,4-dimethyl-cholesta-8,24-dienol is substrate of the C-4 demethylation complex ERG25-ERG26-ERG27 in which ERG25 catalyzes the three-step monooxygenation required for the demethylation of 4,4-dimethyl and 4alpha-methylsterols, ERG26 catalyzes the oxidative decarboxylation that results in a reduction of the 3-beta-hydroxy group at the C-3 carbon to an oxo group, and ERG27 is responsible for the reduction of the keto group on the C-3. ERG28 has a role as a scaffold to help anchor ERG25, ERG26 and ERG27 to the endoplasmic reticulum and ERG29 regulates the activity of the iron-containing C4-methylsterol oxidase ERG25. Then, the sterol 24-C-methyltransferase ERG6 catalyzes the methyl transfer from S-adenosyl-methionine to the C-24 of zymosterol to form fecosterol. The C-8 sterol isomerase ERG2 catalyzes the reaction which results in unsaturation at C-7 in the B ring of sterols and thus converts fecosterol to episterol. The sterol-C5-desaturase ERG3 then catalyzes the introduction of a C-5 double bond in the B ring to produce 5-dehydroepisterol. The C-22 sterol desaturase ERG5 further converts 5-dehydroepisterol into ergosta-5,7,22,24(28)-tetraen-3beta-ol by forming the C-22(23) double bond in the sterol side chain. Finally, ergosta-5,7,22,24(28)-tetraen-3beta-ol is substrate of the C-24(28) sterol reductase ERG4 to produce ergosterol. This chain is Sterol-4-alpha-carboxylate 3-dehydrogenase ERG26, decarboxylating, found in Candida albicans (strain SC5314 / ATCC MYA-2876) (Yeast).